A 123-amino-acid polypeptide reads, in one-letter code: MIKGKSRTEVKALAQYICMSAHKARRVIDQIRGRSYEQTLMILELMPYRASYHIFKLVYSAAANASHNKGLNEADSFISKAEVNGGVIVKKCKPRARGRSYPIKRPTCHITIVLNKRSNLTKK.

Belongs to the universal ribosomal protein uL22 family. As to quaternary structure, part of the 50S ribosomal subunit.

It localises to the plastid. It is found in the chloroplast. In terms of biological role, this protein binds specifically to 23S rRNA. Functionally, the globular domain of the protein is located near the polypeptide exit tunnel on the outside of the subunit, while an extended beta-hairpin is found that lines the wall of the exit tunnel in the center of the 70S ribosome. This is Large ribosomal subunit protein uL22c (rpl22) from Illicium oligandrum (Star anise).